Reading from the N-terminus, the 81-residue chain is Bursicon (81 aa).

As to quaternary structure, heterodimer of burs and pburs. In terms of tissue distribution, central nervous system. Coexpressed with CCAP in most CCAP-specific neurons. Coexpressed with pburs in the large bilateral lateral neurosecretory neurons of the first three unfused abdominal ganglia and in all anterior bilateral cell pairs in the thoracic ganglia.

The protein resides in the secreted. Final heterodimeric neurohormone released at the end of the molting cycle, involved in the sclerotization (tanning) of the insect cuticle, melanization and wing spreading. In Periplaneta americana (American cockroach), this protein is Bursicon (burs).